A 164-amino-acid chain; its full sequence is Cell division protein SepF (164 aa).

Positions 21–71 (YQQGQQPAQQQQSPVQAVPTPAPAPQQQAKRAPVTPLHKPSTTTRNAAPAE) are disordered. Over residues 22–54 (QQGQQPAQQQQSPVQAVPTPAPAPQQQAKRAPV) the composition is skewed to low complexity.

Belongs to the SepF family. As to quaternary structure, homodimer. Interacts with FtsZ.

It is found in the cytoplasm. Cell division protein that is part of the divisome complex and is recruited early to the Z-ring. Probably stimulates Z-ring formation, perhaps through the cross-linking of FtsZ protofilaments. Its function overlaps with FtsA. The protein is Cell division protein SepF of Clavibacter michiganensis subsp. michiganensis (strain NCPPB 382).